Reading from the N-terminus, the 665-residue chain is Translation factor guf1, mitochondrial (665 aa).

Residues 1 to 40 (MRGCLQLARWLSAAPTRPAASHWPGLCAAPRFFSHSAILR) constitute a mitochondrion transit peptide. A tr-type G domain is found at 67-247 (ERYRNFCIVA…TVVDKIPAPI (181 aa)). GTP-binding positions include 76 to 83 (AHVDHGKS), 140 to 144 (DTPGH), and 194 to 197 (NKVD).

The protein belongs to the TRAFAC class translation factor GTPase superfamily. Classic translation factor GTPase family. LepA subfamily.

The protein localises to the mitochondrion inner membrane. The catalysed reaction is GTP + H2O = GDP + phosphate + H(+). Its function is as follows. Promotes mitochondrial protein synthesis. May act as a fidelity factor of the translation reaction, by catalyzing a one-codon backward translocation of tRNAs on improperly translocated ribosomes. Binds to mitochondrial ribosomes in a GTP-dependent manner. The chain is Translation factor guf1, mitochondrial (guf1) from Aspergillus terreus (strain NIH 2624 / FGSC A1156).